An 886-amino-acid chain; its full sequence is Peptidyl-lysine N-acetyltransferase PatZ (886 aa).

Residues 487 to 523 enclose the ATP-grasp domain; the sequence is QPILQAYGMNTLPTWIASDSTEAVHIAEQIGYPVALK. The N-acetyltransferase domain occupies 726-881; that stretch reads CLFRPILPED…GIVGLTLNLA (156 aa).

It in the N-terminal section; belongs to the acetate CoA ligase alpha subunit family. This sequence in the central section; belongs to the acetate CoA ligase beta subunit family. As to quaternary structure, stable tetramer in solution. Oligomerizes to an octameric form by autoacetylation. In terms of processing, autoacetylated. Deacetylated by CobB.

The catalysed reaction is L-lysyl-[protein] + acetyl-CoA = N(6)-acetyl-L-lysyl-[protein] + CoA + H(+). Functionally, catalyzes the acetyl-CoA-dependent acetylation of lysine residues of a large number of target proteins. Acetylates RNase R in exponential phase cells and RNase II. Required for the glucose-dependent acetylation on multiple lysines of alpha, beta and beta' RNAP subunits. Also acetylates acetyl-coenzyme A synthetase (Acs) and the chromosomal replication initiator protein DnaA, and inhibits their activity. Overexpression leads to the acetylation of a large number of additional proteins and inhibits motility. In Escherichia coli (strain K12), this protein is Peptidyl-lysine N-acetyltransferase PatZ.